Reading from the N-terminus, the 331-residue chain is 6-phosphogluconolactonase (331 aa).

At Lys287 the chain carries N6-acetyllysine.

Belongs to the cycloisomerase 2 family.

The enzyme catalyses 6-phospho-D-glucono-1,5-lactone + H2O = 6-phospho-D-gluconate + H(+). It participates in carbohydrate degradation; pentose phosphate pathway; D-ribulose 5-phosphate from D-glucose 6-phosphate (oxidative stage): step 2/3. In terms of biological role, catalyzes the hydrolysis of 6-phosphogluconolactone to 6-phosphogluconate. The chain is 6-phosphogluconolactonase from Escherichia coli (strain SMS-3-5 / SECEC).